The primary structure comprises 360 residues: Phospho-N-acetylmuramoyl-pentapeptide-transferase (360 aa).

The next 10 membrane-spanning stretches (helical) occupy residues 27-47 (GAMITSALIVFLFGPSIINSL), 71-91 (TPTMGGLMIMTGILVSCLLWA), 93-113 (LASVYVWVVLLVTVGFGAIGF), 128-148 (FSGKARLGIEFLIAAVAAFVI), 168-188 (FVVNLSWFFIPFAAFVMVGAG), 199-219 (GLAIVPVMVAAASFGFIAYLS), 239-259 (LAVVLGAVIGAGLGFLWFNAP), 262-282 (AIFMGDTGSLALGGMLGTVAV), 288-308 (IVLAIIGGLFVVEALSVIIQV), and 337-357 (QVVIRFWIVAIILAMIGLSTL).

The protein belongs to the glycosyltransferase 4 family. MraY subfamily. Requires Mg(2+) as cofactor.

It localises to the cell inner membrane. It catalyses the reaction UDP-N-acetyl-alpha-D-muramoyl-L-alanyl-gamma-D-glutamyl-meso-2,6-diaminopimeloyl-D-alanyl-D-alanine + di-trans,octa-cis-undecaprenyl phosphate = di-trans,octa-cis-undecaprenyl diphospho-N-acetyl-alpha-D-muramoyl-L-alanyl-D-glutamyl-meso-2,6-diaminopimeloyl-D-alanyl-D-alanine + UMP. The protein operates within cell wall biogenesis; peptidoglycan biosynthesis. Functionally, catalyzes the initial step of the lipid cycle reactions in the biosynthesis of the cell wall peptidoglycan: transfers peptidoglycan precursor phospho-MurNAc-pentapeptide from UDP-MurNAc-pentapeptide onto the lipid carrier undecaprenyl phosphate, yielding undecaprenyl-pyrophosphoryl-MurNAc-pentapeptide, known as lipid I. The protein is Phospho-N-acetylmuramoyl-pentapeptide-transferase of Brucella anthropi (strain ATCC 49188 / DSM 6882 / CCUG 24695 / JCM 21032 / LMG 3331 / NBRC 15819 / NCTC 12168 / Alc 37) (Ochrobactrum anthropi).